A 259-amino-acid chain; its full sequence is Protein LEAD-SENSITIVE 1 (259 aa).

One can recognise an LRAT domain in the interval 20–168 (YSWRTAYIYA…CKTALLVLEG (149 aa)). Residues His30 and His42 contribute to the active site. Cys152 acts as the Acyl-thioester intermediate in catalysis.

As to expression, highly expressed in inflorescences, siliques and stems, and, to a lower extent, in roots and leaves.

It is found in the cytoplasm. Confers tolerance to lead ions (Pb) stress mediated by Pb(NO(3))(2) probably by promoting Pb accumulation leading to subsequent glutathione-dependent phytochelatin (PC) synthesis and related gene expression, including PDR12/ABCG40, GSH1, GSH2, GR1, GR2, PCS1 and PCS2. The chain is Protein LEAD-SENSITIVE 1 from Arabidopsis thaliana (Mouse-ear cress).